Reading from the N-terminus, the 252-residue chain is Geranylgeranylglyceryl phosphate synthase (252 aa).

2 residues coordinate Mg(2+): aspartate 25 and serine 54. Residues 174–180 (FMDAGSG), 205–206 (GG), and 227–228 (GN) contribute to the sn-glycerol 1-phosphate site.

This sequence belongs to the GGGP/HepGP synthase family. Group II subfamily. As to quaternary structure, homohexamer. Requires Mg(2+) as cofactor.

The catalysed reaction is sn-glycerol 1-phosphate + (2E,6E,10E)-geranylgeranyl diphosphate = sn-3-O-(geranylgeranyl)glycerol 1-phosphate + diphosphate. Its function is as follows. Prenyltransferase that catalyzes the transfer of the geranylgeranyl moiety of geranylgeranyl diphosphate (GGPP) to the C3 hydroxyl of sn-glycerol-1-phosphate (G1P). The polypeptide is Geranylgeranylglyceryl phosphate synthase (Chitinophaga pinensis (strain ATCC 43595 / DSM 2588 / LMG 13176 / NBRC 15968 / NCIMB 11800 / UQM 2034)).